A 138-amino-acid chain; its full sequence is Putative pre-16S rRNA nuclease (138 aa).

It belongs to the YqgF nuclease family.

It is found in the cytoplasm. Functionally, could be a nuclease involved in processing of the 5'-end of pre-16S rRNA. This Caldicellulosiruptor bescii (strain ATCC BAA-1888 / DSM 6725 / KCTC 15123 / Z-1320) (Anaerocellum thermophilum) protein is Putative pre-16S rRNA nuclease.